The following is a 49-amino-acid chain: Photosystem II reaction center protein K (49 aa).

The propeptide occupies 1 to 12 (MISSIHLRKLLG). Residues 24 to 44 (IIDVLPIIPVLFLLLAFVWQA) form a helical membrane-spanning segment.

This sequence belongs to the PsbK family. In terms of assembly, PSII is composed of 1 copy each of membrane proteins PsbA, PsbB, PsbC, PsbD, PsbE, PsbF, PsbH, PsbI, PsbJ, PsbK, PsbL, PsbM, PsbT, PsbX, PsbY, PsbZ, Psb30/Ycf12, at least 3 peripheral proteins of the oxygen-evolving complex and a large number of cofactors. It forms dimeric complexes.

The protein localises to the plastid. Its subcellular location is the chloroplast thylakoid membrane. Functionally, one of the components of the core complex of photosystem II (PSII). PSII is a light-driven water:plastoquinone oxidoreductase that uses light energy to abstract electrons from H(2)O, generating O(2) and a proton gradient subsequently used for ATP formation. It consists of a core antenna complex that captures photons, and an electron transfer chain that converts photonic excitation into a charge separation. The polypeptide is Photosystem II reaction center protein K (Phacus acuminatus).